We begin with the raw amino-acid sequence, 238 residues long: Complement C1q-like protein 4 (238 aa).

The signal sequence occupies residues 1–15 (MVLLLLVAIPLLVHS). The segment at 36-101 (GPRGPGPDGA…PPGPGPGGVA (66 aa)) is disordered. In terms of domain architecture, Collagen-like spans 53-96 (PPGAKGEVGRRGKAGLRGPPGPPGPRGPPGEPGRPGPPGPPGPG). Residues 71–96 (PPGPPGPRGPPGEPGRPGPPGPPGPG) are compositionally biased toward pro residues. In terms of domain architecture, C1q spans 105–238 (GYVPRIAFYA…TFSGFIIYPD (134 aa)).

Forms homooligomers, predominantly dimers or trimers. Forms heterooligomers with C1QL1, C1QL2 and C1QL3, when proteins are coexpressed; this interaction does not occur after secretion. Interacts with ADGRB3. Highest expression levels in testis and adipose tissue, lower levels in skeletal muscle and kidney.

It localises to the secreted. Its function is as follows. May regulate the number of excitatory synapses that are formed on hippocampus neurons. Has no effect on inhibitory synapses. May inhibit adipocyte differentiation at an early stage of the process. The polypeptide is Complement C1q-like protein 4 (C1QL4) (Homo sapiens (Human)).